The sequence spans 583 residues: 2-succinyl-5-enolpyruvyl-6-hydroxy-3-cyclohexene-1-carboxylate synthase (583 aa).

The protein belongs to the TPP enzyme family. MenD subfamily. Homodimer. Mg(2+) is required as a cofactor. It depends on Mn(2+) as a cofactor. Thiamine diphosphate serves as cofactor.

The enzyme catalyses isochorismate + 2-oxoglutarate + H(+) = 5-enolpyruvoyl-6-hydroxy-2-succinyl-cyclohex-3-ene-1-carboxylate + CO2. The protein operates within quinol/quinone metabolism; 1,4-dihydroxy-2-naphthoate biosynthesis; 1,4-dihydroxy-2-naphthoate from chorismate: step 2/7. It functions in the pathway quinol/quinone metabolism; menaquinone biosynthesis. Its function is as follows. Catalyzes the thiamine diphosphate-dependent decarboxylation of 2-oxoglutarate and the subsequent addition of the resulting succinic semialdehyde-thiamine pyrophosphate anion to isochorismate to yield 2-succinyl-5-enolpyruvyl-6-hydroxy-3-cyclohexene-1-carboxylate (SEPHCHC). The protein is 2-succinyl-5-enolpyruvyl-6-hydroxy-3-cyclohexene-1-carboxylate synthase of Chlorobium luteolum (strain DSM 273 / BCRC 81028 / 2530) (Pelodictyon luteolum).